Consider the following 367-residue polypeptide: Methylthioribose-1-phosphate isomerase (367 aa).

The active-site Proton donor is aspartate 250.

This sequence belongs to the eIF-2B alpha/beta/delta subunits family. MtnA subfamily.

The protein localises to the cytoplasm. It localises to the nucleus. The enzyme catalyses 5-(methylsulfanyl)-alpha-D-ribose 1-phosphate = 5-(methylsulfanyl)-D-ribulose 1-phosphate. It participates in amino-acid biosynthesis; L-methionine biosynthesis via salvage pathway; L-methionine from S-methyl-5-thio-alpha-D-ribose 1-phosphate: step 1/6. Functionally, catalyzes the interconversion of methylthioribose-1-phosphate (MTR-1-P) into methylthioribulose-1-phosphate (MTRu-1-P). The sequence is that of Methylthioribose-1-phosphate isomerase (IDI2) from Hordeum vulgare (Barley).